The primary structure comprises 1230 residues: MYIKRVIIKGFKTYRNETIIDNFSPHQNVIIGSNGSGKSNFFAAIRFVLSDDYSNLKREERQGLIHQGSGGSVMSASVEIVFHDPDHSMILPSGVLSRGDDEVTIRRTVGLKKDDYQLNDRNVTKGDIVRMLETAGFSMNNPYNIVPQGKIVALTNAKDKERLQLLEDVVGAKSFEVKLKASLKKMEETEQKKIQINKEMGELNSKLSEMEQERKELEKYNELERNRKIYQFTLYDRELNEVINQMERLDGDYNNTVYSSEQYIQELDKREDMIDQVSKKLSSIEASLKIKNATDLQQAKLRESEISQKLTNVNVKIKDVQQQIESNEEQRNLDSATLKEIKSIIEQRKQKLSKILPRYQELTKEEAMYKLQLASLQQKQRDLILKKGEYARFKSKDERDTWIHSEIEELKSSIQNLNELESQLQMDRTSLRKQYSAIDEEIEELIDSINGPDTKGQLEDFDSELIHLKQKLSESLDTRKELWRKEQKLQTVLETLLSDVNQNQRNVNETMSRSLANGIINVKEITEKLKISPESVFGTLGELIKVNDKYKTCAEVIGGNSLFHIVVDTEETATLIMNELYRMKGGRVTFIPLNRLSLDSDVKFPSNTTTQIQFTPLIKKIKYEPRFEKAVKHVFGKTIVVKDLGQGLKLAKKHKLNAITLDGDRADKRGVLTGGYLDQHKRTRLESLKNLNESRSQHKKILEELDFVRNELNDIDTKIDQVNGNIRKVSNDRESVLTNIEVYRTSLNTKKNEKLILEESLNAIILKLEKLNTNRTFAQEKLNTFENDLLQEFDSELSKEEKERLESLTKEISAAHNKLNITSDALEGITTTIDSLNAELESKLIPQENDLESKMSEVGDAFIFGLQDELKELQLEKESVEKQHENAVLELGTVQREIESLIAEETNNKKLLEKANNQQRLLLKKLDNFQKSVEKTMIKKTTLVTRREELQQRIREIGLLPEDALVNDFSDITSDQLLQRLNDMNTEISGLKNVNKRAFENFKKFNERRKDLAERASELDESKDSIQDLIVKLKQQKVNAVDSTFQKVSENFEAVFERLVPRGTAKLIIHRKNDNANDHDESIDVDMDAESNESQNGKDSEIMYTGVSISVSFNSKQNEQLHVEQLSGGQKTVCAIALILAIQMVDPASFYLFDEIDAALDKQYRTAVATLLKELSKNAQFICTTFRTDMLQVADKFFRVKYENKISTVIEVNREEAIGFIRGSNKFAEV.

Glycine 32–serine 39 provides a ligand contact to ATP. Residues lysine 112 and lysine 113 each carry the N6-acetyllysine modification. Residues alanine 172 to leucine 482 are a coiled coil. The SMC hinge domain maps to serine 535–alanine 651. The stretch at leucine 685–valine 1041 forms a coiled coil. The tract at residues aspartate 1078–glycine 1097 is disordered.

Belongs to the SMC family. SMC3 subfamily. In terms of assembly, cohesin complexes are composed of the SMC1 and SMC3 heterodimer attached via their SMC hinge domain, MCD1/SCC1 which link them, and IRR1/SCC3, which interacts with MCD1. The cohesin complex also interacts with SCC2, which is required for its association with chromosomes. Acetylation at Lys-112 and Lys-113 by ECO1 is important for genome stability and S phase sister chromatid cohesion.

The protein resides in the nucleus. The protein localises to the chromosome. Functionally, involved in chromosome cohesion during cell cycle and in DNA repair. Central component of cohesin complex. The cohesin complex is required for the cohesion of sister chromatids after DNA replication. The cohesin complex apparently forms a large proteinaceous ring within which sister chromatids can be trapped. At anaphase, the complex is cleaved and dissociates from chromatin, allowing sister chromatids to segregate. The polypeptide is Structural maintenance of chromosomes protein 3 (SMC3) (Saccharomyces cerevisiae (strain ATCC 204508 / S288c) (Baker's yeast)).